The chain runs to 585 residues: Protein DENND6B (585 aa).

Residues 43-214 (ECVCVVTFDL…LPVMGVVVQV (172 aa)) enclose the uDENN domain. The region spanning 246-373 (VHELDLFRCF…VKLKKPSRLK (128 aa)) is the cDENN domain. Positions 375-499 (LDTKPGLYTA…KSPHFDGWYR (125 aa)) constitute a dDENN domain.

Belongs to the DENND6 family.

It is found in the recycling endosome. The protein localises to the cytoplasm. In terms of biological role, guanine nucleotide exchange factor (GEF) for RAB14. Also has some, lesser GEF activity towards RAB35. The chain is Protein DENND6B (DENND6B) from Homo sapiens (Human).